The primary structure comprises 196 residues: Imidazoleglycerol-phosphate dehydratase (196 aa).

Belongs to the imidazoleglycerol-phosphate dehydratase family.

It localises to the cytoplasm. The enzyme catalyses D-erythro-1-(imidazol-4-yl)glycerol 3-phosphate = 3-(imidazol-4-yl)-2-oxopropyl phosphate + H2O. The protein operates within amino-acid biosynthesis; L-histidine biosynthesis; L-histidine from 5-phospho-alpha-D-ribose 1-diphosphate: step 6/9. This Clostridium botulinum (strain Kyoto / Type A2) protein is Imidazoleglycerol-phosphate dehydratase.